A 321-amino-acid chain; its full sequence is L-carnitine dehydrogenase (321 aa).

14–19 (GSGVIG) lines the NAD(+) pocket.

This sequence belongs to the 3-hydroxyacyl-CoA dehydrogenase family. L-carnitine dehydrogenase subfamily. Homodimer.

The protein resides in the cytoplasm. The catalysed reaction is carnitine + NAD(+) = 3-dehydrocarnitine + NADH + H(+). Its pathway is amine and polyamine metabolism; carnitine metabolism. Analogs of L-carnitine such as D-carnitine, glycine betaine and choline, are competitive inhibitors of L-carnitine oxidation. Functionally, catalyzes the NAD(+)-dependent oxidation of L-carnitine to 3-dehydrocarnitine. Is specific for L-carnitine and NAD(+) as substrates. D,L-3-hydroxybutyrate, L-lactate, ethanol, L-malate and D,L-isocitrate are not substrates. Is involved in a L-carnitine degradation pathway that allows P.aeruginosa to grow on L-carnitine as the sole source of carbon and nitrogen. In Pseudomonas aeruginosa (strain ATCC 15692 / DSM 22644 / CIP 104116 / JCM 14847 / LMG 12228 / 1C / PRS 101 / PAO1), this protein is L-carnitine dehydrogenase.